We begin with the raw amino-acid sequence, 402 residues long: Putative nickel insertion protein (402 aa).

The protein belongs to the LarC family.

The protein is Putative nickel insertion protein of Synechococcus elongatus (strain ATCC 33912 / PCC 7942 / FACHB-805) (Anacystis nidulans R2).